The following is a 513-amino-acid chain: Na(+)/H(+) antiporter NhaB (513 aa).

Transmembrane regions (helical) follow at residues 23-43, 52-72, 97-117, 120-140, 144-164, 202-222, 238-258, 303-323, 348-368, 391-411, 447-467, and 475-495; these read LALIIFLIVNPLIFLISPFVA, IFTLAMALKCYPLLPGGLLAI, LLLMFMVAGIYFMKQLLLFIF, LLLSIRSKMLLSLSFCVAAAF, FLDALTVVAVVISVAVGFYGI, LMMHAGVGTALGGVMTMVGEP, FFLRMSPVTVPVLICGLLTCL, AIIGVWLVTALALHLAEVGLI, TESLPFTALLTVFFSVVAVII, LFYIFNGLLSSISDNVFVGTI, ATPNGQAAFLFLLTSALAPLI, and VWMALPYTLVLTLVGLLCVEF.

Belongs to the NhaB Na(+)/H(+) (TC 2.A.34) antiporter family.

The protein localises to the cell inner membrane. It catalyses the reaction 2 Na(+)(in) + 3 H(+)(out) = 2 Na(+)(out) + 3 H(+)(in). In terms of biological role, na(+)/H(+) antiporter that extrudes sodium in exchange for external protons. The sequence is that of Na(+)/H(+) antiporter NhaB from Shigella boydii serotype 18 (strain CDC 3083-94 / BS512).